The primary structure comprises 304 residues: Phosphoribosylaminoimidazole-succinocarboxamide synthase (304 aa).

This sequence belongs to the SAICAR synthetase family.

It carries out the reaction 5-amino-1-(5-phospho-D-ribosyl)imidazole-4-carboxylate + L-aspartate + ATP = (2S)-2-[5-amino-1-(5-phospho-beta-D-ribosyl)imidazole-4-carboxamido]succinate + ADP + phosphate + 2 H(+). It functions in the pathway purine metabolism; IMP biosynthesis via de novo pathway; 5-amino-1-(5-phospho-D-ribosyl)imidazole-4-carboxamide from 5-amino-1-(5-phospho-D-ribosyl)imidazole-4-carboxylate: step 1/2. The sequence is that of Phosphoribosylaminoimidazole-succinocarboxamide synthase from Corynebacterium efficiens (strain DSM 44549 / YS-314 / AJ 12310 / JCM 11189 / NBRC 100395).